The sequence spans 373 residues: Anhydro-N-acetylmuramic acid kinase (373 aa).

12 to 19 (GTSLDGVD) contacts ATP.

The protein belongs to the anhydro-N-acetylmuramic acid kinase family.

It carries out the reaction 1,6-anhydro-N-acetyl-beta-muramate + ATP + H2O = N-acetyl-D-muramate 6-phosphate + ADP + H(+). It participates in amino-sugar metabolism; 1,6-anhydro-N-acetylmuramate degradation. The protein operates within cell wall biogenesis; peptidoglycan recycling. Catalyzes the specific phosphorylation of 1,6-anhydro-N-acetylmuramic acid (anhMurNAc) with the simultaneous cleavage of the 1,6-anhydro ring, generating MurNAc-6-P. Is required for the utilization of anhMurNAc either imported from the medium or derived from its own cell wall murein, and thus plays a role in cell wall recycling. In Salmonella dublin (strain CT_02021853), this protein is Anhydro-N-acetylmuramic acid kinase.